Reading from the N-terminus, the 142-residue chain is MAIERTFSIIKPDAVSKNLIGAIYNRFESAGLKVIAAKMLHMSSEQAAGFYAEHQGKPFYDGLVSFMTSGPVMIQVLEGEEAIRRHREIMGATNPKEALAGTLRACFAESIDRNAVHGSDAPASAAREIAYFFSDAEICPRG.

The ATP site is built by lysine 11, phenylalanine 59, arginine 87, threonine 93, arginine 104, and asparagine 114. Residue histidine 117 is the Pros-phosphohistidine intermediate of the active site.

The protein belongs to the NDK family. Homotetramer. Requires Mg(2+) as cofactor.

The protein localises to the cytoplasm. It catalyses the reaction a 2'-deoxyribonucleoside 5'-diphosphate + ATP = a 2'-deoxyribonucleoside 5'-triphosphate + ADP. The enzyme catalyses a ribonucleoside 5'-diphosphate + ATP = a ribonucleoside 5'-triphosphate + ADP. Major role in the synthesis of nucleoside triphosphates other than ATP. The ATP gamma phosphate is transferred to the NDP beta phosphate via a ping-pong mechanism, using a phosphorylated active-site intermediate. This Aeromonas hydrophila subsp. hydrophila (strain ATCC 7966 / DSM 30187 / BCRC 13018 / CCUG 14551 / JCM 1027 / KCTC 2358 / NCIMB 9240 / NCTC 8049) protein is Nucleoside diphosphate kinase.